We begin with the raw amino-acid sequence, 225 residues long: Gene 30 protein (225 aa).

Residues 48-73 (RNSELGHPEVKKEETTQQPEKGEGMA) are disordered. Over residues 51 to 73 (ELGHPEVKKEETTQQPEKGEGMA) the composition is skewed to basic and acidic residues.

In terms of biological role, essential for DNA synthesis. The polypeptide is Gene 30 protein (30) (Bacillus phage SP01 (Bacteriophage SP01)).